The sequence spans 238 residues: Adenylate dimethylallyltransferase (238 aa).

The protein belongs to the isopentenyl transferase family.

It catalyses the reaction dimethylallyl diphosphate + AMP = N(6)-(dimethylallyl)adenosine 5'-phosphate + diphosphate. In terms of biological role, transfers dimethylallyl groups to AMP as part of the biosynthesis of cytokinin phytohormones. In Ralstonia nicotianae (strain ATCC BAA-1114 / GMI1000) (Ralstonia solanacearum), this protein is Adenylate dimethylallyltransferase (tzs).